The primary structure comprises 119 residues: Large ribosomal subunit protein uL18 (119 aa).

Belongs to the universal ribosomal protein uL18 family. As to quaternary structure, part of the 50S ribosomal subunit; part of the 5S rRNA/L5/L18/L25 subcomplex. Contacts the 5S and 23S rRNAs.

In terms of biological role, this is one of the proteins that bind and probably mediate the attachment of the 5S RNA into the large ribosomal subunit, where it forms part of the central protuberance. This chain is Large ribosomal subunit protein uL18, found in Staphylococcus aureus (strain Mu3 / ATCC 700698).